The primary structure comprises 427 residues: Dihydroorotase (427 aa).

Zn(2+) is bound by residues His-58 and His-60. Residues 60–62 (HYR) and Asn-92 contribute to the substrate site. Asp-150, His-177, and His-230 together coordinate Zn(2+). Asn-276 serves as a coordination point for substrate. Asp-303 provides a ligand contact to Zn(2+). The active site involves Asp-303. Residues His-307 and 321–322 (FG) each bind substrate.

Belongs to the metallo-dependent hydrolases superfamily. DHOase family. Class I DHOase subfamily. The cofactor is Zn(2+).

It catalyses the reaction (S)-dihydroorotate + H2O = N-carbamoyl-L-aspartate + H(+). It functions in the pathway pyrimidine metabolism; UMP biosynthesis via de novo pathway; (S)-dihydroorotate from bicarbonate: step 3/3. Functionally, catalyzes the reversible cyclization of carbamoyl aspartate to dihydroorotate. The protein is Dihydroorotase of Lactobacillus leichmannii.